The primary structure comprises 126 residues: MKGYIWGLISVLLVTIAQLLLKWGVVNLPALNLGLHWFDIEWLWSHRHSLVAVMAGLAGYLLSMLCWLFTLKYLPLNKAYPLISLSYVFVYLMVALLPWFNETITLLKTAGVIFILYGVWLISRPE.

The Cytoplasmic portion of the chain corresponds to 1–4 (MKGY). The chain crosses the membrane as a helical span at residues 5 to 25 (IWGLISVLLVTIAQLLLKWGV). The Periplasmic segment spans residues 26–49 (VNLPALNLGLHWFDIEWLWSHRHS). The chain crosses the membrane as a helical span at residues 50-70 (LVAVMAGLAGYLLSMLCWLFT). Residues 71–79 (LKYLPLNKA) lie on the Cytoplasmic side of the membrane. The chain crosses the membrane as a helical span at residues 80 to 100 (YPLISLSYVFVYLMVALLPWF). Residues 101 to 102 (NE) lie on the Periplasmic side of the membrane. A helical membrane pass occupies residues 103 to 123 (TITLLKTAGVIFILYGVWLIS). The Cytoplasmic segment spans residues 124 to 126 (RPE).

The protein belongs to the ArnF family. In terms of assembly, heterodimer of ArnE and ArnF.

Its subcellular location is the cell inner membrane. Its pathway is bacterial outer membrane biogenesis; lipopolysaccharide biosynthesis. Translocates 4-amino-4-deoxy-L-arabinose-phosphoundecaprenol (alpha-L-Ara4N-phosphoundecaprenol) from the cytoplasmic to the periplasmic side of the inner membrane. This Photorhabdus laumondii subsp. laumondii (strain DSM 15139 / CIP 105565 / TT01) (Photorhabdus luminescens subsp. laumondii) protein is Probable 4-amino-4-deoxy-L-arabinose-phosphoundecaprenol flippase subunit ArnF.